Consider the following 256-residue polypeptide: Small ribosomal subunit protein eS1 (256 aa).

A compositionally biased stretch (basic residues) spans 1–18; the sequence is MAVGKNKRLSKGKKGLKK. The segment at 1–20 is disordered; sequence MAVGKNKRLSKGKKGLKKKA. At alanine 2 the chain carries N-acetylalanine; partial.

The protein belongs to the eukaryotic ribosomal protein eS1 family. As to quaternary structure, component of the small ribosomal subunit. Mature ribosomes consist of a small (40S) and a large (60S) subunit. The 40S subunit contains about 33 different proteins and 1 molecule of RNA (18S). The 60S subunit contains about 49 different proteins and 3 molecules of RNA (25S, 5.8S and 5S).

The protein resides in the cytoplasm. This is Small ribosomal subunit protein eS1 from Podospora anserina (strain S / ATCC MYA-4624 / DSM 980 / FGSC 10383) (Pleurage anserina).